The primary structure comprises 607 residues: Zinc metalloproteinase-disintegrin-like atrase-A (607 aa).

A signal peptide spans 1-20 (MIQALLVIICLAVFPHQGSS). The propeptide occupies 21–196 (IILESGNVND…KTSQLTNTPE (176 aa)). A Peptidase M12B domain is found at 205–398 (KYIEFYLVVD…ERPQCILNKP (194 aa)). Residue E208 coordinates Ca(2+). N220 and N270 each carry an N-linked (GlcNAc...) asparagine glycan. D290 provides a ligand contact to Ca(2+). N-linked (GlcNAc...) asparagine glycosylation is present at N301. Cystine bridges form between C314/C393, C353/C377, and C355/C360. Zn(2+) is bound by residues H338, H342, and H348. Residues C393, N396, N411, F413, E415, E418, and D421 each contribute to the Ca(2+) site. Residues 406–492 (RPVCGNNFVE…ECPTDSLQRN (87 aa)) enclose the Disintegrin domain. Intrachain disulfides connect C409–C438, C420–C433, C422–C428, C432–C455, C446–C452, C451–C477, C464–C484, C471–C503, C496–C508, C515–C565, C530–C573, C543–C553, C560–C599, and C593–C604. The N-linked (GlcNAc...) asparagine glycan is linked to N434. Positions 470–472 (DCD) match the D/ECD-tripeptide motif. D472, L473, E475, D487, and S488 together coordinate Ca(2+). The N-linked (GlcNAc...) asparagine glycan is linked to N522.

Belongs to the venom metalloproteinase (M12B) family. P-III subfamily. P-IIIa sub-subfamily. In terms of assembly, monomer. Zn(2+) is required as a cofactor. In terms of tissue distribution, expressed by the venom gland.

Its subcellular location is the secreted. In terms of biological role, snake venom zinc metalloproteinase that inhibits platelet aggregation by cleaving platelet glycoprotein Ib alpha (GP1BA) at Glu-298/Asp-299, and abolishes binding of von Willebrand factor (VWF) to GPIBA. This Naja atra (Chinese cobra) protein is Zinc metalloproteinase-disintegrin-like atrase-A.